The following is a 224-amino-acid chain: Deoxyribose-phosphate aldolase (224 aa).

The active-site Proton donor/acceptor is the Asp92. Catalysis depends on Lys155, which acts as the Schiff-base intermediate with acetaldehyde. Lys184 functions as the Proton donor/acceptor in the catalytic mechanism.

This sequence belongs to the DeoC/FbaB aldolase family. DeoC type 1 subfamily.

The protein localises to the cytoplasm. It catalyses the reaction 2-deoxy-D-ribose 5-phosphate = D-glyceraldehyde 3-phosphate + acetaldehyde. The protein operates within carbohydrate degradation; 2-deoxy-D-ribose 1-phosphate degradation; D-glyceraldehyde 3-phosphate and acetaldehyde from 2-deoxy-alpha-D-ribose 1-phosphate: step 2/2. Functionally, catalyzes a reversible aldol reaction between acetaldehyde and D-glyceraldehyde 3-phosphate to generate 2-deoxy-D-ribose 5-phosphate. The protein is Deoxyribose-phosphate aldolase of Halalkalibacterium halodurans (strain ATCC BAA-125 / DSM 18197 / FERM 7344 / JCM 9153 / C-125) (Bacillus halodurans).